The following is a 226-amino-acid chain: UPF0111 protein AF_1799 (226 aa).

The protein belongs to the UPF0111 family.

This chain is UPF0111 protein AF_1799, found in Archaeoglobus fulgidus (strain ATCC 49558 / DSM 4304 / JCM 9628 / NBRC 100126 / VC-16).